We begin with the raw amino-acid sequence, 460 residues long: Notoamide biosynthesis cluster transcriptional coactivator notR (460 aa).

Residues 74-145 (LQDLARQVEI…EPMPNYVSHT (72 aa)) enclose the HTH iclR-type domain. Positions 107–126 (IQDLADLAGVPDIQLRRVIR) form a DNA-binding region, H-T-H motif. The segment at 300–320 (TRDFTPQPESSPRPGSASSRV) is disordered.

It is found in the nucleus. In terms of biological role, transcription factor that probably regulates the expression of the gene cluster that mediates the biosynthesis of notoamide, a fungal indole alkaloid that belongs to a family of natural products containing a characteristic bicyclo[2.2.2]diazaoctane core. The chain is Notoamide biosynthesis cluster transcriptional coactivator notR from Aspergillus sp. (strain MF297-2).